The following is a 471-amino-acid chain: Mitochondrial distribution and morphology protein 10 (471 aa).

Residues 313–338 are disordered; the sequence is SNSAATPPRIKNSDSQVLSNNSTDSK. Over residues 325 to 338 the composition is skewed to polar residues; that stretch reads SDSQVLSNNSTDSK.

The protein belongs to the MDM10 family. In terms of assembly, component of the ER-mitochondria encounter structure (ERMES) or MDM complex, composed of MMM1, MDM10, MDM12 and MDM34. Associates with the mitochondrial outer membrane sorting assembly machinery SAM(core) complex.

The protein localises to the mitochondrion outer membrane. Its function is as follows. Component of the ERMES/MDM complex, which serves as a molecular tether to connect the endoplasmic reticulum and mitochondria. Components of this complex are involved in the control of mitochondrial shape and protein biogenesis and may function in phospholipid exchange. MDM10 is involved in the late assembly steps of the general translocase of the mitochondrial outer membrane (TOM complex). Functions in the TOM40-specific route of the assembly of outer membrane beta-barrel proteins, including the association of TOM40 with the receptor TOM22 and small TOM proteins. Can associate with the SAM(core) complex as well as the MDM12-MMM1 complex, both involved in late steps of the major beta-barrel assembly pathway, that is responsible for biogenesis of all outer membrane beta-barrel proteins. May act as a switch that shuttles between both complexes and channels precursor proteins into the TOM40-specific pathway. Plays a role in mitochondrial morphology and in the inheritance of mitochondria. This Debaryomyces hansenii (strain ATCC 36239 / CBS 767 / BCRC 21394 / JCM 1990 / NBRC 0083 / IGC 2968) (Yeast) protein is Mitochondrial distribution and morphology protein 10.